The primary structure comprises 242 residues: Ubiquinone biosynthesis O-methyltransferase (242 aa).

S-adenosyl-L-methionine contacts are provided by Arg-44, Gly-64, Asp-85, and Met-129.

The protein belongs to the methyltransferase superfamily. UbiG/COQ3 family.

It carries out the reaction a 3-demethylubiquinol + S-adenosyl-L-methionine = a ubiquinol + S-adenosyl-L-homocysteine + H(+). The enzyme catalyses a 3-(all-trans-polyprenyl)benzene-1,2-diol + S-adenosyl-L-methionine = a 2-methoxy-6-(all-trans-polyprenyl)phenol + S-adenosyl-L-homocysteine + H(+). The protein operates within cofactor biosynthesis; ubiquinone biosynthesis. O-methyltransferase that catalyzes the 2 O-methylation steps in the ubiquinone biosynthetic pathway. The sequence is that of Ubiquinone biosynthesis O-methyltransferase from Klebsiella pneumoniae (strain 342).